A 210-amino-acid chain; its full sequence is MTKGILGRKIGMTQVFAENGELIPVTVIAANPNVVLQKKTTETDGYNAIQLGFEDKREKLTNKPEQGHTAKASTTPKRFIREIRDADVDGLEVGQEVKVDVFATGEIVDVTGISKGKGFQGVIKRHGQSRGPMSHGSRYHRRPGSMGPVAPNRVFKGKKLAGRMGGDQVTIQNLEIVQVDTERNLLLVKGNVPGAKKSLVVVQGAVKVTQ.

Positions 125–151 (RHGQSRGPMSHGSRYHRRPGSMGPVAP) are disordered.

The protein belongs to the universal ribosomal protein uL3 family. As to quaternary structure, part of the 50S ribosomal subunit. Forms a cluster with proteins L14 and L19.

Functionally, one of the primary rRNA binding proteins, it binds directly near the 3'-end of the 23S rRNA, where it nucleates assembly of the 50S subunit. The polypeptide is Large ribosomal subunit protein uL3 (Bacillus cereus (strain ATCC 14579 / DSM 31 / CCUG 7414 / JCM 2152 / NBRC 15305 / NCIMB 9373 / NCTC 2599 / NRRL B-3711)).